We begin with the raw amino-acid sequence, 181 residues long: Adenine phosphoribosyltransferase (181 aa).

Belongs to the purine/pyrimidine phosphoribosyltransferase family. In terms of assembly, homodimer.

It localises to the cytoplasm. The catalysed reaction is AMP + diphosphate = 5-phospho-alpha-D-ribose 1-diphosphate + adenine. It participates in purine metabolism; AMP biosynthesis via salvage pathway; AMP from adenine: step 1/1. Its function is as follows. Catalyzes a salvage reaction resulting in the formation of AMP, that is energically less costly than de novo synthesis. This chain is Adenine phosphoribosyltransferase, found in Methylobacterium sp. (strain 4-46).